The following is a 464-amino-acid chain: Argininosuccinate lyase (464 aa).

The protein belongs to the lyase 1 family. Argininosuccinate lyase subfamily.

It is found in the cytoplasm. It catalyses the reaction 2-(N(omega)-L-arginino)succinate = fumarate + L-arginine. It functions in the pathway amino-acid biosynthesis; L-arginine biosynthesis; L-arginine from L-ornithine and carbamoyl phosphate: step 3/3. The chain is Argininosuccinate lyase from Azotobacter vinelandii (strain DJ / ATCC BAA-1303).